Reading from the N-terminus, the 132-residue chain is Fatty acid-binding protein 9 (132 aa).

Residues serine 13, serine 14, serine 40, serine 42, serine 44, and serine 91 each carry the phosphoserine modification.

It belongs to the calycin superfamily. Fatty-acid binding protein (FABP) family. Testis.

Its subcellular location is the cytoplasm. The polypeptide is Fatty acid-binding protein 9 (Fabp9) (Mus musculus (Mouse)).